Consider the following 151-residue polypeptide: Methylated-DNA--protein-cysteine methyltransferase (151 aa).

The Nucleophile; methyl group acceptor role is filled by C119.

Belongs to the MGMT family.

It localises to the cytoplasm. The enzyme catalyses a 6-O-methyl-2'-deoxyguanosine in DNA + L-cysteinyl-[protein] = S-methyl-L-cysteinyl-[protein] + a 2'-deoxyguanosine in DNA. The catalysed reaction is a 4-O-methyl-thymidine in DNA + L-cysteinyl-[protein] = a thymidine in DNA + S-methyl-L-cysteinyl-[protein]. Involved in the cellular defense against the biological effects of O6-methylguanine (O6-MeG) and O4-methylthymine (O4-MeT) in DNA. Repairs the methylated nucleobase in DNA by stoichiometrically transferring the methyl group to a cysteine residue in the enzyme. This is a suicide reaction: the enzyme is irreversibly inactivated. This Saccharolobus islandicus (strain Y.N.15.51 / Yellowstone #2) (Sulfolobus islandicus) protein is Methylated-DNA--protein-cysteine methyltransferase.